Here is a 119-residue protein sequence, read N- to C-terminus: Large ribosomal subunit protein uL18 (119 aa).

This sequence belongs to the universal ribosomal protein uL18 family. In terms of assembly, part of the 50S ribosomal subunit; part of the 5S rRNA/L5/L18/L25 subcomplex. Contacts the 5S and 23S rRNAs.

This is one of the proteins that bind and probably mediate the attachment of the 5S RNA into the large ribosomal subunit, where it forms part of the central protuberance. In Jannaschia sp. (strain CCS1), this protein is Large ribosomal subunit protein uL18.